We begin with the raw amino-acid sequence, 453 residues long: Cobyrinate a,c-diamide synthase (453 aa).

One can recognise a GATase cobBQ-type domain in the interval 250 to 440 (RIAVPFDEAF…IHTHTACLPD (191 aa)). The Nucleophile role is filled by cysteine 332.

Belongs to the CobB/CbiA family. It depends on Mg(2+) as a cofactor.

It carries out the reaction cob(II)yrinate + 2 L-glutamine + 2 ATP + 2 H2O = cob(II)yrinate a,c diamide + 2 L-glutamate + 2 ADP + 2 phosphate + 2 H(+). It catalyses the reaction Ni-sirohydrochlorin + 2 L-glutamine + 2 ATP + 2 H2O = Ni-sirohydrochlorin a,c-diamide + 2 L-glutamate + 2 ADP + 2 phosphate + 2 H(+). Its pathway is cofactor biosynthesis; adenosylcobalamin biosynthesis; cob(II)yrinate a,c-diamide from sirohydrochlorin (anaerobic route): step 10/10. Catalyzes the ATP-dependent amidation of the two carboxylate groups at positions a and c of cobyrinate, using either L-glutamine or ammonia as the nitrogen source. Involved in the biosynthesis of the unique nickel-containing tetrapyrrole coenzyme F430, the prosthetic group of methyl-coenzyme M reductase (MCR), which plays a key role in methanogenesis and anaerobic methane oxidation. Catalyzes the ATP-dependent amidation of the two carboxylate groups at positions a and c of Ni-sirohydrochlorin, using L-glutamine or ammonia as the nitrogen source. This Methanosphaera stadtmanae (strain ATCC 43021 / DSM 3091 / JCM 11832 / MCB-3) protein is Cobyrinate a,c-diamide synthase.